The chain runs to 107 residues: U1-lycotoxin-Ls1v (107 aa).

An N-terminal signal peptide occupies residues 1–20 (MMKVLVVVALLVTLISYSSS). The propeptide occupies 21-41 (EGIDDLEADELLSLTANEQTR). 4 disulfides stabilise this stretch: Cys44/Cys59, Cys51/Cys68, Cys58/Cys86, and Cys70/Cys84.

Belongs to the neurotoxin 19 (CSTX) family. 04 (U1-Lctx) subfamily. Expressed by the venom gland.

Its subcellular location is the secreted. The polypeptide is U1-lycotoxin-Ls1v (Lycosa singoriensis (Wolf spider)).